A 184-amino-acid polypeptide reads, in one-letter code: MKNLTDSFVYLGHWPAAGSFGFNTDILATNPINLSVVFGVLIFFGKGVLNDLLDNRKQRILNTIRNSEELREGAIQQLENARARLRKVEAEADQFRVNGYSEIEREKLNLINSTSKTLKQLENYKNETILVEQQRTINQVRERIFQQALQGAIGTLNSCLSNELHLRTINANIGMFGTMKKITD.

Residues 27 to 49 (LATNPINLSVVFGVLIFFGKGVL) form a helical membrane-spanning segment.

Belongs to the ATPase B chain family. In terms of assembly, F-type ATPases have 2 components, F(1) - the catalytic core - and F(0) - the membrane proton channel. F(1) has five subunits: alpha(3), beta(3), gamma(1), delta(1), epsilon(1). F(0) has four main subunits: a(1), b(1), b'(1) and c(10-14). The alpha and beta chains form an alternating ring which encloses part of the gamma chain. F(1) is attached to F(0) by a central stalk formed by the gamma and epsilon chains, while a peripheral stalk is formed by the delta, b and b' chains.

It is found in the plastid. It localises to the chloroplast thylakoid membrane. F(1)F(0) ATP synthase produces ATP from ADP in the presence of a proton or sodium gradient. F-type ATPases consist of two structural domains, F(1) containing the extramembraneous catalytic core and F(0) containing the membrane proton channel, linked together by a central stalk and a peripheral stalk. During catalysis, ATP synthesis in the catalytic domain of F(1) is coupled via a rotary mechanism of the central stalk subunits to proton translocation. Functionally, component of the F(0) channel, it forms part of the peripheral stalk, linking F(1) to F(0). This chain is ATP synthase subunit b, chloroplastic, found in Lobularia maritima (Sweet alyssum).